The primary structure comprises 327 residues: Homeotic protein distal-less (327 aa).

The homeobox DNA-binding region spans 124–183 (MRKPRTIYSSLQLQQLNRRFQRTQYLALPERAELAASLGLTQTQVKIWFQNRRSKYKKMM). Residues 181–303 (KMMKAAQGPG…THHHNPPPQM (123 aa)) are disordered. The segment covering 231-249 (LPPGHSPTPSSTPVSELSP) has biased composition (low complexity). Basic and acidic residues predominate over residues 266–275 (QKPHWIDHKP). Residues 276–286 (PPQMTPQPPHP) show a composition bias toward pro residues.

As to expression, expressed in the embryo in limb primordia of the head and thoracic segments. Expressed in regions of the larval leg, wing, antennal and haltere disks that form the distal-most regions of the mature structures (in the leg this corresponds to the tarsus and the distal tibia). Found in the optic center of the developing larval brain.

Its subcellular location is the nucleus. In terms of biological role, transcription factor that plays a role in larval and adult appendage development. Specifies the identity of ventral appendages (including legs and antennae) and suppresses dorsal appendage development. Involved in patterning the distal-proximal limb axis. May control the adhesive properties of cells during limb morphogenesis. Also has a secondary role in the normal patterning of the wing margin. In Drosophila melanogaster (Fruit fly), this protein is Homeotic protein distal-less (Dll).